A 40-amino-acid chain; its full sequence is MDLRLVLVASPILLAVGWAGFNIGRAAVGQLQLMLKRARG.

The chain crosses the membrane as a helical span at residues 5-23 (LVLVASPILLAVGWAGFNI).

This sequence belongs to the PsbY family. As to quaternary structure, PSII is composed of 1 copy each of membrane proteins PsbA, PsbB, PsbC, PsbD, PsbE, PsbF, PsbH, PsbI, PsbJ, PsbK, PsbL, PsbM, PsbT, PsbX, PsbY, PsbZ, Psb30/Ycf12, peripheral proteins PsbO, CyanoQ (PsbQ), PsbU, PsbV and a large number of cofactors. It forms dimeric complexes.

Its subcellular location is the cellular thylakoid membrane. Loosely associated component of the core of photosystem II (PSII), it is not always seen in crystals. PSII is a light-driven water plastoquinone oxidoreductase, using light energy to abstract electrons from H(2)O, generating a proton gradient subsequently used for ATP formation. This chain is Photosystem II reaction center protein Y, found in Synechococcus sp. (strain RCC307).